Reading from the N-terminus, the 347-residue chain is Haptoglobin (347 aa).

The N-terminal stretch at 1-18 (MSALGAVIALLLWGQLFA) is a signal peptide. One can recognise a Sushi domain in the interval 31–88 (DGCPKPPQIAHGYVEHSVRYQCKNYYRLRTEGDGVYTLNSEKQWINKAVGDKLPECEA). 4 disulfide bridges follow: Cys52/Cys86, Cys90/Cys207, Cys250/Cys281, and Cys292/Cys322. In terms of domain architecture, Peptidase S1 spans 103–347 (ILGGHLDAKG…DWVQKTIAKN (245 aa)). N-linked (GlcNAc...) asparagine glycosylation is found at Asn125, Asn148, Asn152, and Asn182. The interval 259 to 264 (VPEKKT) is interaction with CD163.

The protein belongs to the peptidase S1 family. In terms of assembly, tetramer of two alpha and two beta chains; disulfide-linked. The hemoglobin/haptoglobin complex is composed of a haptoglobin dimer bound to two hemoglobin alpha-beta dimers. Interacts with CD163. Interacts with ERGIC3.

The protein resides in the secreted. Its function is as follows. As a result of hemolysis, hemoglobin is found to accumulate in the kidney and is secreted in the urine. Haptoglobin captures, and combines with free plasma hemoglobin to allow hepatic recycling of heme iron and to prevent kidney damage. Haptoglobin also acts as an antioxidant, has antibacterial activity and plays a role in modulating many aspects of the acute phase response. Hemoglobin/haptoglobin complexes are rapidly cleared by the macrophage CD163 scavenger receptor expressed on the surface of liver Kupfer cells through an endocytic lysosomal degradation pathway. The polypeptide is Haptoglobin (HP) (Pongo abelii (Sumatran orangutan)).